A 205-amino-acid polypeptide reads, in one-letter code: Suppressor of IKBKE 1 (205 aa).

Coiled-coil stretches lie at residues 4–32 (TIDKILQDAKTLLERLKDHDNAAESLIDQ) and 154–192 (KAIQLDEDQAYNIQERLAQLELENKELREILSVRNESLR).

This sequence belongs to the SIKE family. As to quaternary structure, interacts with IKBKE and TBK1 via its coiled coil region. Interaction with TBK1 is disrupted upon viral infection or TLR3 stimulation. Interacts with CDC42BPB. Associates with the STRIPAK core complex composed of PP2A catalytic and scaffolding subunits, the striatins (PP2A regulatory subunits), the striatin-associated proteins MOB4, STRIP1 and STRIP2, PDCD10 and members of the STE20 kinases, such as STK24 and STK26.

It is found in the cytoplasm. Functionally, suppressor of IKK-epsilon. Associates with the striatin-interacting phosphatase and kinase (STRIPAK) core complex, forming the extended (SIKE1:SLMAP)STRIPAK complex. The (SIKE1:SLMAP)STRIPAK complex dephosphorylates STK3 leading to the inhibition of Hippo signaling and the control of cell growth. The protein is Suppressor of IKBKE 1 (sike1) of Xenopus laevis (African clawed frog).